A 692-amino-acid polypeptide reads, in one-letter code: Methionine--tRNA ligase (692 aa).

A 'HIGH' region motif is present at residues 15-25 (PYANGPIHLGH). Zn(2+) is bound by residues cysteine 146, cysteine 149, cysteine 159, and cysteine 162. Residues 332-336 (KMSKS) carry the 'KMSKS' region motif. Lysine 335 contributes to the ATP binding site. A disordered region spans residues 552 to 577 (TTEAAPEKKAKKSAETADVAVDTRSP). Residues 556-566 (APEKKAKKSAE) show a composition bias toward basic and acidic residues. The tRNA-binding domain maps to 591-692 (DFAKLDLRIA…EGAQPGMRVK (102 aa)).

This sequence belongs to the class-I aminoacyl-tRNA synthetase family. MetG type 1 subfamily. As to quaternary structure, homodimer. Zn(2+) serves as cofactor.

The protein resides in the cytoplasm. The catalysed reaction is tRNA(Met) + L-methionine + ATP = L-methionyl-tRNA(Met) + AMP + diphosphate. Functionally, is required not only for elongation of protein synthesis but also for the initiation of all mRNA translation through initiator tRNA(fMet) aminoacylation. This Shewanella sediminis (strain HAW-EB3) protein is Methionine--tRNA ligase.